The sequence spans 55 residues: Large ribosomal subunit protein bL33 (55 aa).

It belongs to the bacterial ribosomal protein bL33 family.

The sequence is that of Large ribosomal subunit protein bL33 from Aliivibrio fischeri (strain ATCC 700601 / ES114) (Vibrio fischeri).